The primary structure comprises 207 residues: Large ribosomal subunit protein uL4 (207 aa).

Residues 49–77 (HAVKNRSAVRGGGKKPWRQKGTGRARQGS) form a disordered region. Residues 60-71 (GGKKPWRQKGTG) show a composition bias toward basic residues.

It belongs to the universal ribosomal protein uL4 family. In terms of assembly, part of the 50S ribosomal subunit.

One of the primary rRNA binding proteins, this protein initially binds near the 5'-end of the 23S rRNA. It is important during the early stages of 50S assembly. It makes multiple contacts with different domains of the 23S rRNA in the assembled 50S subunit and ribosome. Its function is as follows. Forms part of the polypeptide exit tunnel. In Levilactobacillus brevis (strain ATCC 367 / BCRC 12310 / CIP 105137 / JCM 1170 / LMG 11437 / NCIMB 947 / NCTC 947) (Lactobacillus brevis), this protein is Large ribosomal subunit protein uL4.